We begin with the raw amino-acid sequence, 142 residues long: Large-conductance mechanosensitive channel (142 aa).

2 consecutive transmembrane segments (helical) span residues 10 to 30 and 86 to 106; these read FAIKGNVIDLAVGVIIGAAFS and GNFITVAVNFAILAFIIFLMV.

It belongs to the MscL family. As to quaternary structure, homopentamer.

It localises to the cell inner membrane. In terms of biological role, channel that opens in response to stretch forces in the membrane lipid bilayer. May participate in the regulation of osmotic pressure changes within the cell. In Polaromonas naphthalenivorans (strain CJ2), this protein is Large-conductance mechanosensitive channel.